Consider the following 122-residue polypeptide: Large ribosomal subunit protein uL14c (122 aa).

The protein belongs to the universal ribosomal protein uL14 family. Part of the 50S ribosomal subunit.

Its subcellular location is the plastid. It is found in the chloroplast. In terms of biological role, binds to 23S rRNA. This chain is Large ribosomal subunit protein uL14c, found in Daucus carota (Wild carrot).